Here is a 506-residue protein sequence, read N- to C-terminus: Protein MGF 505-9R (506 aa).

Belongs to the asfivirus MGF 505 family.

Plays a role in virus cell tropism, and may be required for efficient virus replication in macrophages. This African swine fever virus (isolate Tick/South Africa/Pretoriuskop Pr4/1996) (ASFV) protein is Protein MGF 505-9R.